Reading from the N-terminus, the 240-residue chain is Eukaryotic translation initiation factor 3 subunit J (240 aa).

Residues 19-95 are disordered; that stretch reads KADVNKWAGE…FANMTPEQQL (77 aa). The segment covering 28-45 has biased composition (acidic residues); that stretch reads EDEDDVKDNWEDDDEEEE. The span at 46–56 shows a compositional bias: basic and acidic residues; the sequence is KKDAPKQEDTP. Over residues 60–71 the composition is skewed to basic residues; that stretch reads AKPKKAAQQKKL. 2 coiled-coil regions span residues 63 to 90 and 176 to 235; these read KKAA…ANMT and SNNI…DYDD. A compositionally biased stretch (basic and acidic residues) spans 72-81; it reads KKEDLERLQR.

This sequence belongs to the eIF-3 subunit J family. Component of the eukaryotic translation initiation factor 3 (eIF-3) complex.

The protein localises to the cytoplasm. Functionally, component of the eukaryotic translation initiation factor 3 (eIF-3) complex, which is involved in protein synthesis of a specialized repertoire of mRNAs and, together with other initiation factors, stimulates binding of mRNA and methionyl-tRNAi to the 40S ribosome. The eIF-3 complex specifically targets and initiates translation of a subset of mRNAs involved in cell proliferation. The chain is Eukaryotic translation initiation factor 3 subunit J from Anopheles gambiae (African malaria mosquito).